Reading from the N-terminus, the 322-residue chain is Malate dehydrogenase (322 aa).

NAD(+)-binding positions include 10–15 (GSGMIG) and Asp34. 2 residues coordinate substrate: Arg83 and Arg89. NAD(+) is bound by residues Asn96 and 119 to 121 (ITN). The substrate site is built by Asn121 and Arg152. His176 functions as the Proton acceptor in the catalytic mechanism.

It belongs to the LDH/MDH superfamily. MDH type 3 family.

It catalyses the reaction (S)-malate + NAD(+) = oxaloacetate + NADH + H(+). Functionally, catalyzes the reversible oxidation of malate to oxaloacetate. The polypeptide is Malate dehydrogenase (Mesorhizobium japonicum (strain LMG 29417 / CECT 9101 / MAFF 303099) (Mesorhizobium loti (strain MAFF 303099))).